The chain runs to 66 residues: Cell division protein ZapB (66 aa).

A coiled-coil region spans residues 3 to 59 (LELLSQLETKIQATLENIELLKMELEEEKQKSTQLAEKNQKLQQDLNSWSDKVNGLV).

It belongs to the ZapB family. As to quaternary structure, homodimer. The ends of the coiled-coil dimer bind to each other, forming polymers. Interacts with FtsZ.

The protein localises to the cytoplasm. Its function is as follows. Non-essential, abundant cell division factor that is required for proper Z-ring formation. It is recruited early to the divisome by direct interaction with FtsZ, stimulating Z-ring assembly and thereby promoting cell division earlier in the cell cycle. Its recruitment to the Z-ring requires functional FtsA or ZipA. The protein is Cell division protein ZapB of Shewanella denitrificans (strain OS217 / ATCC BAA-1090 / DSM 15013).